The primary structure comprises 387 residues: Double C2-like domain-containing protein gamma (387 aa).

2 consecutive C2 domains span residues 83–209 (ALGT…DICL) and 243–376 (ERGR…ELWH). Ca(2+) is bound by residues Asp-274, Asp-280, Asp-334, Asp-336, and Asp-342.

Ca(2+) serves as cofactor.

May be involved in regulation of vesicular trafficking. In vitro, does not bind calcium and phospholipids. This is Double C2-like domain-containing protein gamma (Doc2g) from Mus musculus (Mouse).